The chain runs to 60 residues: Large ribosomal subunit protein bL32 (60 aa).

The span at 1-16 shows a compositional bias: basic residues; it reads MAVPRRKTSPSRRGMR. The tract at residues 1–60 is disordered; the sequence is MAVPRRKTSPSRRGMRRSADAIKKPTYAEDKDSGELRRPHHLDLKTGMYKGRQVLIKKES. A compositionally biased stretch (basic and acidic residues) spans 17–44; the sequence is RSADAIKKPTYAEDKDSGELRRPHHLDL.

This sequence belongs to the bacterial ribosomal protein bL32 family.

This Rhodopseudomonas palustris (strain BisA53) protein is Large ribosomal subunit protein bL32.